The following is a 589-amino-acid chain: Muscarinic acetylcholine receptor M3 (589 aa).

Residues 1-66 (MTLHSNSTTS…DPLGGHTIWQ (66 aa)) lie on the Extracellular side of the membrane. N-linked (GlcNAc...) asparagine glycosylation is found at N6, N15, N41, N48, and N52. Residues 67 to 90 (VVFIAFLTGFLALVTIIGNILVIV) traverse the membrane as a helical segment. Over 91–103 (AFKVNKQLKTVNN) the chain is Cytoplasmic. Residues 104–129 (YFLLSLACADLIIGVISMNLFTTYII) traverse the membrane as a helical segment. The Extracellular portion of the chain corresponds to 130-141 (MNRWALGNLACD). C140 and C220 are oxidised to a cystine. A helical membrane pass occupies residues 142 to 163 (LWLSIDYVASNASVMNLLVISF). At 164–183 (DRYFSITRPLTYRAKRTTKR) the chain is on the cytoplasmic side. Residues 184 to 205 (AGVMIGLAWVISFVLWAPAILF) form a helical membrane-spanning segment. Residues 206–228 (WQYFVGKRTVPPGECFIQFLSEP) lie on the Extracellular side of the membrane. The chain crosses the membrane as a helical span at residues 229–251 (TITFGTAIAAFYMPVTIMTILYW). Residues 252–490 (RIYKETEKRT…SLIKEKKAAQ (239 aa)) are Cytoplasmic-facing. Residues 274 to 280 (AEAENFV) carry the Basolateral sorting signal motif. Disordered stretches follow at residues 275-295 (EAEN…YELQ) and 323-356 (AEQM…EEDI). A compositionally biased stretch (polar residues) spans 283-295 (TGSSRSCSSYELQ). A compositionally biased stretch (low complexity) spans 333–344 (SDSWNNNDAAAS). S384 is subject to Phosphoserine. Residues 491 to 513 (TLSAILLAFIITWTPYNIMVLVN) traverse the membrane as a helical segment. Residues 514-525 (TFCDSCIPKTYW) lie on the Extracellular side of the membrane. The cysteines at positions 516 and 519 are disulfide-linked. The chain crosses the membrane as a helical span at residues 526-545 (NLGYWLCYINSTVNPVCYAL). Residues 546–589 (CNKTFRTTFKMLLLCQCDKRKRRKQQYQQRQSVIFHKRVPEQAL) lie on the Cytoplasmic side of the membrane.

It belongs to the G-protein coupled receptor 1 family. Muscarinic acetylcholine receptor subfamily. CHRM3 sub-subfamily. Homodimer; the dimers can form tetramers. Interacts with NALCN. Interacts with TMEM147. In terms of tissue distribution, expressed in cerebral cortex, submandibular gland, hypothalamus, pancreas, liver, and ileum.

The protein localises to the cell membrane. The protein resides in the postsynaptic cell membrane. It localises to the basolateral cell membrane. Its subcellular location is the endoplasmic reticulum membrane. The muscarinic acetylcholine receptor mediates various cellular responses, including inhibition of adenylate cyclase, breakdown of phosphoinositides and modulation of potassium channels through the action of G proteins. Primary transducing effect is Pi turnover. This Mus musculus (Mouse) protein is Muscarinic acetylcholine receptor M3 (Chrm3).